The sequence spans 252 residues: 7-carboxy-7-deazaguanine synthase (252 aa).

Substrate contacts are provided by residues 22-24 and arginine 37; that span reads LQG. A Radical SAM core domain is found at 28–251; sequence FVGEPQAFVR…QVHKLVDFIP (224 aa). [4Fe-4S] cluster-binding residues include cysteine 41, cysteine 45, and cysteine 48. Threonine 102 is a binding site for substrate. Glycine 104 contributes to the S-adenosyl-L-methionine binding site.

This sequence belongs to the radical SAM superfamily. 7-carboxy-7-deazaguanine synthase family. Homodimer. Requires [4Fe-4S] cluster as cofactor. S-adenosyl-L-methionine is required as a cofactor. Mg(2+) serves as cofactor.

It carries out the reaction 6-carboxy-5,6,7,8-tetrahydropterin + H(+) = 7-carboxy-7-deazaguanine + NH4(+). It participates in purine metabolism; 7-cyano-7-deazaguanine biosynthesis. Catalyzes the complex heterocyclic radical-mediated conversion of 6-carboxy-5,6,7,8-tetrahydropterin (CPH4) to 7-carboxy-7-deazaguanine (CDG), a step common to the biosynthetic pathways of all 7-deazapurine-containing compounds. This Methanopyrus kandleri (strain AV19 / DSM 6324 / JCM 9639 / NBRC 100938) protein is 7-carboxy-7-deazaguanine synthase.